The following is a 552-amino-acid chain: Hyaluronan synthase 2 (552 aa).

Topologically, residues 1-11 (MHCERFLCILR) are cytoplasmic. A helical transmembrane segment spans residues 12–32 (IIGTTLFGVSLLLGITAAYIV). The Extracellular segment spans residues 33 to 45 (GYQFIQTDNYYFS). A helical membrane pass occupies residues 46-66 (FGLYGAFLASHLIIQSLFAFL). The Cytoplasmic portion of the chain corresponds to 67–374 (EHRKMKKSLE…NAMWFHKHHL (308 aa)). Thr110 carries the phosphothreonine modification. Lys190 is covalently cross-linked (Glycyl lysine isopeptide (Lys-Gly) (interchain with G-Cter in ubiquitin)). Residue Ser221 is glycosylated (O-linked (GlcNAc) serine). Thr328 is modified (phosphothreonine). The chain crosses the membrane as a helical span at residues 375–395 (WMTYEAIITGFFPFFLIATVI). At 396 to 402 (QLFYRGK) the chain is on the extracellular side. Residues 403–423 (IWNILLFLLTVQLVGLIKSSF) traverse the membrane as a helical segment. The Cytoplasmic portion of the chain corresponds to 424-429 (ASCLRG). Residues 430–450 (NIVMVFMSLYSVLYMSSLLPA) form a helical membrane-spanning segment. Topologically, residues 451-475 (KMFAIATINKAGWGTSGRKTIVVNF) are extracellular. Residues 476 to 496 (IGLIPVSVWFTILLGGVIFTI) traverse the membrane as a helical segment. The Cytoplasmic segment spans residues 497–510 (YKESKRPFSESKQT). The helical transmembrane segment at 511 to 531 (VLIVGTLLYACYWVMLLTLYV) threads the bilayer. Over 532-552 (VLINKCGRRKKGQQYDMVLDV) the chain is Extracellular.

The protein belongs to the NodC/HAS family. As to quaternary structure, homodimer; dimerization promotes enzymatic activity. Forms heterodimer with HAS3. Forms heterodimer with HAS1. Mg(2+) is required as a cofactor. In terms of processing, phosphorylation at Thr-328 is essential for hyaluronan synthase activity. Phosphorylation at Thr-110 is required for transport from ER to Golgi. O-GlcNAcylation at Ser-221 increases the stability of HAS2 and plasma membrane localization. Post-translationally, ubiquitination at Lys-190; this ubiquitination is essential for hyaluronan synthase activity and homo- or hetero-oligomerization. Can also be poly-ubiquitinated. Deubiquitinated by USP17 and USP4. USP17 efficiently removes 'Lys-63'- and 'Lys-48'-linked polyubiquitin chains, whereas USP4 preferentially removes monoubiquitination and, partially, both 'Lys-63'- and 'Lys-48'-linked polyubiquitin chain. Expressed in fibroblasts.

The protein resides in the cell membrane. It is found in the endoplasmic reticulum membrane. Its subcellular location is the vesicle. The protein localises to the golgi apparatus membrane. It localises to the lysosome. The catalysed reaction is [hyaluronan](n) + UDP-N-acetyl-alpha-D-glucosamine = N-acetyl-beta-D-glucosaminyl-(1-&gt;4)-[hyaluronan](n) + UDP + H(+). It catalyses the reaction N-acetyl-beta-D-glucosaminyl-(1-&gt;4)-[hyaluronan](n) + UDP-alpha-D-glucuronate = [hyaluronan](n+1) + UDP + H(+). Its pathway is glycan biosynthesis; hyaluronan biosynthesis. With respect to regulation, regulated by several post-translational modifications such as ubiquitination/deubiquitination, phosphorylation and O-GlcNAcylation. The enzymatic activity depends on the availability of UDP-GlcUA and UDP-GlcNAc. Catalyzes the addition of GlcNAc or GlcUA monosaccharides to the nascent hyaluronan polymer. Therefore, it is essential to hyaluronan synthesis a major component of most extracellular matrices that has a structural role in tissues architectures and regulates cell adhesion, migration and differentiation. This is one of three isoenzymes responsible for cellular hyaluronan synthesis and it is particularly responsible for the synthesis of high molecular mass hyaluronan. The polypeptide is Hyaluronan synthase 2 (Homo sapiens (Human)).